Reading from the N-terminus, the 1311-residue chain is Mitogen-activated protein kinase kinase kinase 19 (1311 aa).

7 disordered regions span residues 85 to 119 (PDPL…SPPD), 250 to 274 (PLSQ…PVEH), 330 to 363 (SVKE…YLSS), 396 to 472 (MTPA…NPEM), 486 to 508 (EGTS…PAQN), 576 to 607 (HRPH…KQAF), and 734 to 767 (SKDK…FLSS). The span at 250–261 (PLSQSAEFSSSK) shows a compositional bias: polar residues. 3 stretches are compositionally biased toward basic and acidic residues: residues 262-274 (NHQE…PVEH), 330-345 (SVKE…RDSG), and 450-464 (LEGH…KIPM). Residues 734–748 (SKDKGCKDMGGHTED) are compositionally biased toward basic and acidic residues. Residues 1044-1307 (WTKGEILGRG…ALQLLKHSFL (264 aa)) form the Protein kinase domain. ATP-binding positions include 1050-1058 (LGRGAYGTV) and lysine 1072. The active-site Proton acceptor is the aspartate 1169.

The protein belongs to the protein kinase superfamily. STE Ser/Thr protein kinase family. STE20 subfamily.

The enzyme catalyses L-seryl-[protein] + ATP = O-phospho-L-seryl-[protein] + ADP + H(+). It catalyses the reaction L-threonyl-[protein] + ATP = O-phospho-L-threonyl-[protein] + ADP + H(+). The sequence is that of Mitogen-activated protein kinase kinase kinase 19 (Map3k19) from Mus musculus (Mouse).